A 500-amino-acid chain; its full sequence is LEM protein 2 (500 aa).

The LEM domain occupies 1–45 (MVDVEKMSDAELRAELNVRGANVGPVTGTTRSLYEKKLKKLLSGG). Over 1-325 (MVDVEKMSDA…VKQTNIFNEA (325 aa)) the chain is Nuclear. The disordered stretch occupies residues 39–202 (KKLLSGGAKT…RRITSVPGLI (164 aa)). Residues 46–57 (AKTPARPTVAKP) are compositionally biased toward low complexity. Over residues 58–75 (APKPTPKSAPAPKSPKSP) the composition is skewed to pro residues. Residues 77 to 89 (ARRSIPRAAATAA) show a composition bias toward low complexity. Residues 103–122 (EEMSDSDDDMRDDDDDDEEI) show a composition bias toward acidic residues. Low complexity-rich tracts occupy residues 130 to 141 (SSFRSANSTASS) and 168 to 197 (NTPR…RITS). Residues 326 to 346 (IYFALYVILILFVVLGIAYAL) traverse the membrane as a helical segment. At 347 to 378 (TTTHRPKTADFSGYWGVLKAAGRDSLNFFYNY) the chain is on the perinuclear space side. Residues 379–399 (AILPVVSLGIFVVLGAGIYFG) form a helical membrane-spanning segment. Over 400 to 500 (HRKYKEAKEQ…WIGNQSQKRW (101 aa)) the chain is Nuclear.

As to quaternary structure, interacts with lmn-1. Interacts (via LEM domain and the C-terminal nuclear domain) with baf-1. Ubiquitous. High expression in germline and intestine.

It localises to the nucleus inner membrane. Its subcellular location is the nucleus envelope. The protein localises to the chromosome. Its function is as follows. Nuclear lamina-associated inner nuclear membrane protein that is involved in cell division, nuclear structure organization, maintenance of nuclear envelope integrity and nuclear envelope reformation after mitosis. In interphase cells, plays a role in anchoring and spatial arrangement of chromosome arms at the nuclear periphery, forming so-called lem-2 subdomains. Both arms of autosomes but only the left arm of the X chromosome are anchored in lem-2 subdomains; sequences bound by lem-2 are mainly repetitive chromosome sequences and inactive genes. Involved in chromosome segregation and cell division, probably via its interaction with the nuclear intermediate filament protein lmn-1, the main component of nuclear lamina. Required to organize the distribution of lmn-1, nuclear pore complexes (NPCs) and chromatin in mitotically active cells. Involved in the nuclear positioning and efficient anchoring of microtubule-organizing centers (MTOCs) to the nuclear envelope during mitosis as well as on maintaining correct nuclear morphology. Contributes to closure of nuclear envelope (NE) holes and prevents excess nuclear membranes after meiosis and mitosis. Together with emr-1, plays a role in baf-1 enrichment at the nuclear envelope in anaphase. Together with emr-1, involved in muscle cell attachment to hypodermal cells, as well as muscle cell location and sarcomere organization. May play a role in radiation-induced DNA damage repair response. The chain is LEM protein 2 (lem-2) from Caenorhabditis elegans.